We begin with the raw amino-acid sequence, 303 residues long: Probable porphobilinogen deaminase (303 aa).

Cysteine 233 is modified (S-(dipyrrolylmethanemethyl)cysteine).

The protein belongs to the HMBS family. It depends on dipyrromethane as a cofactor.

It catalyses the reaction 4 porphobilinogen + H2O = hydroxymethylbilane + 4 NH4(+). It participates in porphyrin-containing compound metabolism; protoporphyrin-IX biosynthesis; coproporphyrinogen-III from 5-aminolevulinate: step 2/4. In terms of biological role, tetrapolymerization of the monopyrrole PBG into the hydroxymethylbilane pre-uroporphyrinogen in several discrete steps. This Methanocella arvoryzae (strain DSM 22066 / NBRC 105507 / MRE50) protein is Probable porphobilinogen deaminase.